The sequence spans 478 residues: Proline--tRNA ligase (478 aa).

This sequence belongs to the class-II aminoacyl-tRNA synthetase family. ProS type 3 subfamily. As to quaternary structure, homodimer.

It localises to the cytoplasm. It carries out the reaction tRNA(Pro) + L-proline + ATP = L-prolyl-tRNA(Pro) + AMP + diphosphate. Catalyzes the attachment of proline to tRNA(Pro) in a two-step reaction: proline is first activated by ATP to form Pro-AMP and then transferred to the acceptor end of tRNA(Pro). The sequence is that of Proline--tRNA ligase from Clostridium botulinum (strain 657 / Type Ba4).